A 514-amino-acid chain; its full sequence is Cytochrome P450 monooxygenase ptmQ (514 aa).

The helical transmembrane segment at 3–23 threads the bilayer; the sequence is YVAQSPWIATLIVTATTYCTL. Asparagine 148 carries N-linked (GlcNAc...) asparagine glycosylation. Cysteine 452 provides a ligand contact to heme. Asparagine 486 carries N-linked (GlcNAc...) asparagine glycosylation.

The protein belongs to the cytochrome P450 family. The cofactor is heme.

It is found in the membrane. The protein operates within secondary metabolite biosynthesis. Functionally, cytochrome P450 monooxygenase; part of the gene cluster that mediates the biosynthesis of the indole diterpenes penitrems. The geranylgeranyl diphosphate (GGPP) synthase ptmG catalyzes the first step in penitrem biosynthesis via conversion of farnesyl pyrophosphate and isopentyl pyrophosphate into geranylgeranyl pyrophosphate (GGPP). Condensation of indole-3-glycerol phosphate with GGPP by the prenyl transferase ptmC then forms 3-geranylgeranylindole (3-GGI). Epoxidation by the FAD-dependent monooxygenase ptmM leads to a epoxidized-GGI that is substrate of the terpene cyclase ptmB for cyclization to yield paspaline. Paspaline is subsequently converted to 13-desoxypaxilline by the cytochrome P450 monooxygenase ptmP, the latter being then converted to paxilline by the cytochrome P450 monooxygenase ptmQ. Paxilline is converted to beta-paxitriol via C-10 ketoreduction by the short-chain dehydrogenase ptmH which can be monoprenylated at the C-20 by the indole diterpene prenyltransferase ptmD. A two-step elimination (acetylation and elimination) process performed by the O-acetyltransferase ptmV and ptmI leads to the production of the prenylated form of penijanthine. The FAD-linked oxidoreductase ptmO then converts the prenylated form of penijanthine into PC-M5 which is in turn transformed into PC-M4 by the aromatic dimethylallyltransferase ptmE. Five sequential oxidative transformations performed by the cytochrome P450 monooxygenases ptmK, ptmU, ptmL, ptmN and ptmJ yield the various penitrem compounds. PtmK, ptmU and ptmM are involved in the formation of the key bicyclic ring of penitrem C via the formation of the intermediates secopenitrem D and penitrem D. PtmL catalyzes the epoxidation of penitrem D and C to yield penitrem B and F, respectively. PtmJ catalyzes the last benzylic hydroxylation to convert penitrem B to prenitrem E and penitrem F to penitrem A. The chain is Cytochrome P450 monooxygenase ptmQ from Penicillium ochrochloron.